Consider the following 84-residue polypeptide: Mu-conotoxin-like Cal 12.2a (84 aa).

The first 19 residues, 1–19 (MKLTCVLVVLLLVLPFGDL), serve as a signal peptide directing secretion. A propeptide spanning residues 20–42 (ITTSNTEDNKRGATPWQNSLKAR) is cleaved from the precursor. Disulfide bonds link cysteine 45-cysteine 57, cysteine 52-cysteine 65, cysteine 59-cysteine 70, and cysteine 64-cysteine 76. Proline 48 carries the post-translational modification 4-hydroxyproline. Tryptophan 72 carries the 6'-bromotryptophan modification. A 4-hydroxyproline modification is found at proline 77. Tryptophan 81 is subject to 6'-bromotryptophan.

This sequence belongs to the conotoxin O1 superfamily. In terms of tissue distribution, expressed by the venom duct.

The protein localises to the secreted. Functionally, mu-conotoxins block voltage-gated sodium channels. This toxin reversibly blocks voltage-gated sodium channel in cephalopods, with no alteration in the voltage dependence of sodium conductance or on the kinetics of inactivation. This Californiconus californicus (California cone) protein is Mu-conotoxin-like Cal 12.2a.